A 298-amino-acid polypeptide reads, in one-letter code: Foldase protein PrsA 1 (298 aa).

The N-terminal stretch at 1-23 (MNKTWKKAATVLAFAGIALSATA) is a signal peptide. A lipid anchor (N-palmitoyl cysteine) is attached at Cys-24. A lipid anchor (S-diacylglycerol cysteine) is attached at Cys-24. One can recognise a PpiC domain in the interval 141–234 (QPEVTVQHIL…YGYHVIKMIK (94 aa)).

Belongs to the PrsA family.

Its subcellular location is the cell membrane. It carries out the reaction [protein]-peptidylproline (omega=180) = [protein]-peptidylproline (omega=0). Functionally, plays a major role in protein secretion by helping the post-translocational extracellular folding of several secreted proteins. The sequence is that of Foldase protein PrsA 1 (prsA1) from Lactobacillus johnsonii (strain CNCM I-12250 / La1 / NCC 533).